A 314-amino-acid polypeptide reads, in one-letter code: Malate dehydrogenase (314 aa).

NAD(+) is bound at residue 9–15; that stretch reads IGVGNVG. Residues R84 and R90 each contribute to the substrate site. Residues N97 and 120 to 122 contribute to the NAD(+) site; that span reads ISN. Substrate contacts are provided by N122 and R153. The active-site Proton acceptor is the H177.

This sequence belongs to the LDH/MDH superfamily.

It carries out the reaction (S)-malate + NAD(+) = oxaloacetate + NADH + H(+). Functionally, catalyzes the reversible oxidation of malate to oxaloacetate. This chain is Malate dehydrogenase, found in Aliarcobacter butzleri (strain RM4018) (Arcobacter butzleri).